The sequence spans 906 residues: Protein translocase subunit SecA (906 aa).

Residues Q86, 104 to 108, and D499 each bind ATP; that span reads GEGKT. Zn(2+) contacts are provided by C890, C892, C901, and H902.

It belongs to the SecA family. Monomer and homodimer. Part of the essential Sec protein translocation apparatus which comprises SecA, SecYEG and auxiliary proteins SecDF-YajC and YidC. Zn(2+) serves as cofactor.

It localises to the cell inner membrane. The protein localises to the cytoplasm. The catalysed reaction is ATP + H2O + cellular proteinSide 1 = ADP + phosphate + cellular proteinSide 2.. Part of the Sec protein translocase complex. Interacts with the SecYEG preprotein conducting channel. Has a central role in coupling the hydrolysis of ATP to the transfer of proteins into and across the cell membrane, serving both as a receptor for the preprotein-SecB complex and as an ATP-driven molecular motor driving the stepwise translocation of polypeptide chains across the membrane. This chain is Protein translocase subunit SecA, found in Rickettsia prowazekii (strain Madrid E).